A 221-amino-acid chain; its full sequence is Ribonuclease HII (221 aa).

In terms of domain architecture, RNase H type-2 spans 29–220 (RRVAGVDEVG…LRDLQAGEIG (192 aa)). 3 residues coordinate a divalent metal cation: Asp35, Glu36, and Asp129. The interval 198 to 221 (LGPSPQHRRSFAPLRDLQAGEIGG) is disordered.

Belongs to the RNase HII family. Mn(2+) serves as cofactor. It depends on Mg(2+) as a cofactor.

It is found in the cytoplasm. It catalyses the reaction Endonucleolytic cleavage to 5'-phosphomonoester.. In terms of biological role, endonuclease that specifically degrades the RNA of RNA-DNA hybrids. The chain is Ribonuclease HII from Synechococcus sp. (strain JA-3-3Ab) (Cyanobacteria bacterium Yellowstone A-Prime).